The following is a 226-amino-acid chain: Fibrillarin-like rRNA/tRNA 2'-O-methyltransferase (226 aa).

S-adenosyl-L-methionine-binding positions include 85–86, 104–105, 129–130, and 149–152; these read TT, EF, DA, and DVAQ.

It belongs to the methyltransferase superfamily. Fibrillarin family. In terms of assembly, interacts with nop5. Component of box C/D small ribonucleoprotein (sRNP) particles that contain rpl7ae, FlpA and nop5, plus a guide RNA.

Its function is as follows. Involved in pre-rRNA and tRNA processing. Utilizes the methyl donor S-adenosyl-L-methionine to catalyze the site-specific 2'-hydroxyl methylation of ribose moieties in rRNA and tRNA. Site specificity is provided by a guide RNA that base pairs with the substrate. Methylation occurs at a characteristic distance from the sequence involved in base pairing with the guide RNA. The protein is Fibrillarin-like rRNA/tRNA 2'-O-methyltransferase of Thermococcus gammatolerans (strain DSM 15229 / JCM 11827 / EJ3).